The primary structure comprises 247 residues: NAD-dependent protein deacetylase 2 (247 aa).

One can recognise a Deacetylase sirtuin-type domain in the interval 1 to 247 (MDQIRQLAQW…ASVRKQIQAE (247 aa)). 8 residues coordinate NAD(+): Ala23, Thr27, Phe34, Arg35, Gln103, Ile105, Asp106, and His121. Phe34 lines the nicotinamide pocket. Nicotinamide is bound by residues Ile105 and Asp106. The active-site Proton acceptor is His121. Positions 129, 132, 149, and 152 each coordinate Zn(2+). Positions 188, 189, 215, and 233 each coordinate NAD(+).

This sequence belongs to the sirtuin family. Class U subfamily. Requires Zn(2+) as cofactor.

It localises to the cytoplasm. It catalyses the reaction N(6)-acetyl-L-lysyl-[protein] + NAD(+) + H2O = 2''-O-acetyl-ADP-D-ribose + nicotinamide + L-lysyl-[protein]. Functionally, NAD-dependent protein deacetylase which modulates the activities of several enzymes which are inactive in their acetylated form. The polypeptide is NAD-dependent protein deacetylase 2 (Geobacillus kaustophilus (strain HTA426)).